The primary structure comprises 286 residues: ATP synthase gamma chain (286 aa).

Belongs to the ATPase gamma chain family. As to quaternary structure, F-type ATPases have 2 components, CF(1) - the catalytic core - and CF(0) - the membrane proton channel. CF(1) has five subunits: alpha(3), beta(3), gamma(1), delta(1), epsilon(1). CF(0) has three main subunits: a, b and c.

Its subcellular location is the cell membrane. Its function is as follows. Produces ATP from ADP in the presence of a proton gradient across the membrane. The gamma chain is believed to be important in regulating ATPase activity and the flow of protons through the CF(0) complex. The sequence is that of ATP synthase gamma chain from Ureaplasma urealyticum serovar 10 (strain ATCC 33699 / Western).